We begin with the raw amino-acid sequence, 188 residues long: Proline-rich protein 3 (188 aa).

The disordered stretch occupies residues 1 to 157 (MPKRKKQNHH…DPQVMEDKSD (157 aa)). 2 stretches are compositionally biased toward pro residues: residues 35-46 (IGPPSLLGPPPM) and 69-82 (LIPP…PPWG). Residues 83 to 96 (RGPIRRGLGPRSSP) show a composition bias toward low complexity. The span at 145–157 (PKDDPQVMEDKSD) shows a compositional bias: basic and acidic residues. Residues 155 to 183 (KSDRPVCRHFAKKGHCRYEDLCAFYHPGV) form a C3H1-type zinc finger.

This Homo sapiens (Human) protein is Proline-rich protein 3 (PRR3).